Here is a 202-residue protein sequence, read N- to C-terminus: ATP-dependent Clp protease proteolytic subunit 1 (202 aa).

Ser-102 acts as the Nucleophile in catalysis. Residue His-127 is part of the active site.

It belongs to the peptidase S14 family. As to quaternary structure, fourteen ClpP subunits assemble into 2 heptameric rings which stack back to back to give a disk-like structure with a central cavity, resembling the structure of eukaryotic proteasomes.

It localises to the cytoplasm. It carries out the reaction Hydrolysis of proteins to small peptides in the presence of ATP and magnesium. alpha-casein is the usual test substrate. In the absence of ATP, only oligopeptides shorter than five residues are hydrolyzed (such as succinyl-Leu-Tyr-|-NHMec, and Leu-Tyr-Leu-|-Tyr-Trp, in which cleavage of the -Tyr-|-Leu- and -Tyr-|-Trp bonds also occurs).. Its function is as follows. Cleaves peptides in various proteins in a process that requires ATP hydrolysis. Has a chymotrypsin-like activity. Plays a major role in the degradation of misfolded proteins. This is ATP-dependent Clp protease proteolytic subunit 1 from Agrobacterium fabrum (strain C58 / ATCC 33970) (Agrobacterium tumefaciens (strain C58)).